Consider the following 313-residue polypeptide: Porphobilinogen deaminase (313 aa).

Residue C242 is modified to S-(dipyrrolylmethanemethyl)cysteine.

Belongs to the HMBS family. As to quaternary structure, monomer. Dipyrromethane is required as a cofactor.

The enzyme catalyses 4 porphobilinogen + H2O = hydroxymethylbilane + 4 NH4(+). The protein operates within porphyrin-containing compound metabolism; protoporphyrin-IX biosynthesis; coproporphyrinogen-III from 5-aminolevulinate: step 2/4. Its function is as follows. Tetrapolymerization of the monopyrrole PBG into the hydroxymethylbilane pre-uroporphyrinogen in several discrete steps. The chain is Porphobilinogen deaminase from Pseudomonas entomophila (strain L48).